Consider the following 820-residue polypeptide: Nuclear pore complex protein Nup93 (820 aa).

The protein belongs to the nucleoporin interacting component (NIC) family.

It is found in the nucleus membrane. The protein localises to the nucleus. Its subcellular location is the nuclear pore complex. Plays a role in the nuclear pore complex (NPC) assembly and/or maintenance. This chain is Nuclear pore complex protein Nup93 (nup93), found in Xenopus laevis (African clawed frog).